The sequence spans 443 residues: Endonuclease CUE2 (443 aa).

2 consecutive CUE domains span residues 8–51 (DHES…KEND) and 55–98 (TVDN…NYET). The Smr domain maps to 347–443 (LDFHGFLPSE…YFRIEGKKKK (97 aa)).

MRNA endonuclease involved in the No-Go Decay (NGD) pathway, which catalyzes mRNA cleavage and degradation in response to ribosome collisions. Acts downstream of the ribosome collision sensor HEL2. Specifically recognizes and binds RPS7/eS7 polyubiquitinated by MOT2/NOT4 and HEL2, promoting CUE2 recruitment to stalled ribosomes, where it mediates mRNA cleavage upstream of the colliding ribosome. Also mediates mRNA cleavage within colliding ribosomes: recruited to colliding ribosomes downstream of the RQT (ribosome quality control trigger) complex following disassembly of stalled ribosomes and cleaves mRNAs partially released from the colliding ribosome. In Saccharomyces cerevisiae (strain ATCC 204508 / S288c) (Baker's yeast), this protein is Endonuclease CUE2.